Here is a 298-residue protein sequence, read N- to C-terminus: Acetate permease A (298 aa).

The interval 1–43 is disordered; it reads MSAEQNHGLEKDVGGPAAPAAAAPNAPAAAPGAPPAGMSAEEH. The segment covering 14–37 has biased composition (low complexity); sequence GGPAAPAAAAPNAPAAAPGAPPAG. The next 6 helical transmembrane spans lie at 86 to 106, 115 to 135, 146 to 166, 185 to 205, 210 to 230, and 245 to 265; these read APLG…INMG, IVIA…GMWE, ALSS…PGGF, SFGL…FCTL, AFFL…VGYI, and AGGF…LAGI.

The protein belongs to the acetate uptake transporter (AceTr) (TC 2.A.96) family.

It is found in the cell membrane. The protein resides in the vacuole membrane. Its function is as follows. High affinity monocarboxylate transporter (MCT) involved in acetate uptake. Unlike other activities involved in acetate utilization, acpA is dispensable for growth on the acetate precursor ethanol. This is Acetate permease A from Emericella nidulans (strain FGSC A4 / ATCC 38163 / CBS 112.46 / NRRL 194 / M139) (Aspergillus nidulans).